Consider the following 221-residue polypeptide: MAQKLWGSCLFSLFMAALAQETLNPQKSKVDCNKGVTGTVYEYGANTIDGGEFVNFQQYAGKHILFVNVASFCGLTATYPELNTLQEELKPFNVTVLGFPCNQFGKQEPGKNSEILLGLKYVRPGGGYVPNFQLFEKGDVNGDNEQKVFSFLKNSCPPTSELFGSPEHLFWDPMKVHDIRWNFEKFLVGPDGVPVMRWFHHTPVRIVQSDIMEYLNQTSTQ.

The signal sequence occupies residues 1–19 (MAQKLWGSCLFSLFMAALA). Residue C73 is part of the active site.

This sequence belongs to the glutathione peroxidase family.

The protein resides in the secreted. It catalyses the reaction 2 glutathione + H2O2 = glutathione disulfide + 2 H2O. In Mus musculus (Mouse), this protein is Glutathione peroxidase 6 (Gpx6).